The chain runs to 542 residues: CTP synthase (542 aa).

Positions 1–266 are amidoligase domain; the sequence is MATNYIFVTG…DDLICQRFRL (266 aa). S14 serves as a coordination point for CTP. Position 14 (S14) interacts with UTP. Residues 15–20 and D72 contribute to the ATP site; that span reads SLGKGI. D72 and E140 together coordinate Mg(2+). CTP contacts are provided by residues 147–149, 187–192, and K223; these read DIE and KTKPTQ. UTP is bound by residues 187 to 192 and K223; that span reads KTKPTQ. 239-241 provides a ligand contact to ATP; the sequence is KDV. One can recognise a Glutamine amidotransferase type-1 domain in the interval 291 to 542; it reads TIGMVGKYVE…VKAAKENQKK (252 aa). G352 contacts L-glutamine. C379 functions as the Nucleophile; for glutamine hydrolysis in the catalytic mechanism. L-glutamine-binding positions include 380–383, E403, and R470; that span reads LGMQ. Residues H515 and E517 contribute to the active site.

It belongs to the CTP synthase family. In terms of assembly, homotetramer.

It carries out the reaction UTP + L-glutamine + ATP + H2O = CTP + L-glutamate + ADP + phosphate + 2 H(+). It catalyses the reaction L-glutamine + H2O = L-glutamate + NH4(+). The enzyme catalyses UTP + NH4(+) + ATP = CTP + ADP + phosphate + 2 H(+). It participates in pyrimidine metabolism; CTP biosynthesis via de novo pathway; CTP from UDP: step 2/2. With respect to regulation, allosterically activated by GTP, when glutamine is the substrate; GTP has no effect on the reaction when ammonia is the substrate. The allosteric effector GTP functions by stabilizing the protein conformation that binds the tetrahedral intermediate(s) formed during glutamine hydrolysis. Inhibited by the product CTP, via allosteric rather than competitive inhibition. Catalyzes the ATP-dependent amination of UTP to CTP with either L-glutamine or ammonia as the source of nitrogen. Regulates intracellular CTP levels through interactions with the four ribonucleotide triphosphates. This is CTP synthase from Mannheimia succiniciproducens (strain KCTC 0769BP / MBEL55E).